The following is a 428-amino-acid chain: Enolase (428 aa).

Residue Gln164 coordinates (2R)-2-phosphoglycerate. Glu208 functions as the Proton donor in the catalytic mechanism. Asp245, Glu286, and Asp313 together coordinate Mg(2+). (2R)-2-phosphoglycerate-binding residues include Lys338, Arg367, Ser368, and Lys389. The active-site Proton acceptor is Lys338.

It belongs to the enolase family. The cofactor is Mg(2+).

The protein resides in the cytoplasm. It localises to the secreted. The protein localises to the cell surface. The catalysed reaction is (2R)-2-phosphoglycerate = phosphoenolpyruvate + H2O. It participates in carbohydrate degradation; glycolysis; pyruvate from D-glyceraldehyde 3-phosphate: step 4/5. Catalyzes the reversible conversion of 2-phosphoglycerate (2-PG) into phosphoenolpyruvate (PEP). It is essential for the degradation of carbohydrates via glycolysis. The polypeptide is Enolase (Pyrococcus abyssi (strain GE5 / Orsay)).